A 185-amino-acid chain; its full sequence is Threonylcarbamoyl-AMP synthase (185 aa).

One can recognise a YrdC-like domain in the interval Glu-3–Arg-185.

This sequence belongs to the SUA5 family. TsaC subfamily.

It localises to the cytoplasm. The enzyme catalyses L-threonine + hydrogencarbonate + ATP = L-threonylcarbamoyladenylate + diphosphate + H2O. In terms of biological role, required for the formation of a threonylcarbamoyl group on adenosine at position 37 (t(6)A37) in tRNAs that read codons beginning with adenine. Catalyzes the conversion of L-threonine, HCO(3)(-)/CO(2) and ATP to give threonylcarbamoyl-AMP (TC-AMP) as the acyladenylate intermediate, with the release of diphosphate. This Shewanella woodyi (strain ATCC 51908 / MS32) protein is Threonylcarbamoyl-AMP synthase.